The primary structure comprises 352 residues: C-C chemokine receptor type 5 (352 aa).

At 1–30 (MDYQVSSPTYDIDYYTSEPCQKINVKQIAG) the chain is on the extracellular side. Tyr-3 bears the Sulfotyrosine mark. 2 O-linked (GalNAc...) serine glycosylation sites follow: Ser-6 and Ser-7. Sulfotyrosine is present on residues Tyr-10, Tyr-14, and Tyr-15. Cystine bridges form between Cys-20–Cys-269 and Cys-101–Cys-178. A helical transmembrane segment spans residues 31 to 58 (RLLPPLYSLVFIFGFVGNILVVLILINC). Topologically, residues 59–68 (KRLKSMTDIY) are cytoplasmic. A helical membrane pass occupies residues 69–89 (LLNLAISDLLFLLTVPFWAHY). The Extracellular segment spans residues 90-102 (AAAQWDFGNTMCQ). The helical transmembrane segment at 103–124 (LLTGLYFIGFFSGIFFIILLTI) threads the bilayer. The Cytoplasmic portion of the chain corresponds to 125–141 (DRYLAIVHAVFALKART). A helical membrane pass occupies residues 142-166 (VTFGVVTSVITWVVAVFASLPGIIF). Topologically, residues 167–198 (TRSQREGLHYTCSSHFPYSQYQFWKNFQTLKI) are extracellular. Residues 199–218 (VILGLVLPLLVMVICYSGIL) traverse the membrane as a helical segment. Residues 219–235 (KTLLRCRNEKKRHRAVR) lie on the Cytoplasmic side of the membrane. The helical transmembrane segment at 236–260 (LIFTIMIVYFLFWAPYNIVLLLNTF) threads the bilayer. The Extracellular segment spans residues 261-277 (QEFFGLNNCSSSNRLDQ). A helical membrane pass occupies residues 278–301 (AMQVTETLGMTHCCINPIIYAFVG). Over 302-352 (EKFRNYLLVFFQKHIAKRFCKCCSIFQQEAPERASSVYTRSTGEQEISVGL) the chain is Cytoplasmic. 3 S-palmitoyl cysteine lipidation sites follow: Cys-321, Cys-323, and Cys-324. 4 positions are modified to phosphoserine; by BARK1: Ser-336, Ser-337, Ser-342, and Ser-349.

This sequence belongs to the G-protein coupled receptor 1 family. In terms of assembly, interacts with PRAF2. Efficient ligand binding to CCL3/MIP-1alpha and CCL4/MIP-1beta requires sulfation, O-glycosylation and sialic acid modifications. Glycosylation on Ser-6 is required for efficient binding of CCL4. Interacts with GRK2. Interacts with ARRB1 and ARRB2. Interacts with CNIH4. Interacts with S100A4; this interaction stimulates T-lymphocyte chemotaxis. Post-translationally, sulfated on at least 2 of the N-terminal tyrosines. Sulfation is required for efficient binding of the chemokines, CCL3 and CCL4. In terms of processing, palmitoylation in the C-terminal is important for cell surface expression. Phosphorylation on serine residues in the C-terminal is stimulated by binding CC chemokines especially by APO-RANTES. Post-translationally, O-glycosylated, but not N-glycosylated. Ser-6 appears to be the major site even if Ser-7 may be also O-glycosylated. Also sialylated glycans present which contribute to chemokine binding. Thr-16 and Ser-17 may also be glycosylated and, if so, with small moieties such as a T-antigen.

Its subcellular location is the cell membrane. Receptor for a number of inflammatory CC-chemokines including CCL3/MIP-1-alpha, CCL4/MIP-1-beta and RANTES and subsequently transduces a signal by increasing the intracellular calcium ion level. May play a role in the control of granulocytic lineage proliferation or differentiation. Participates in T-lymphocyte migration to the infection site by acting as a chemotactic receptor. The chain is C-C chemokine receptor type 5 (CCR5) from Theropithecus gelada (Gelada baboon).